A 352-amino-acid polypeptide reads, in one-letter code: Photosystem II D2 protein (352 aa).

An N-acetylthreonine modification is found at Thr2. The residue at position 2 (Thr2) is a Phosphothreonine. Residues Thr40–Thr60 form a helical membrane-spanning segment. Residue His117 coordinates chlorophyll a. A helical transmembrane segment spans residues Gly124 to Pro140. Residues Gln129 and Asn142 each contribute to the pheophytin a site. A helical transmembrane segment spans residues Val152 to Ser165. Residue His197 coordinates chlorophyll a. The chain crosses the membrane as a helical span at residues Ala207 to Asp227. Residues His214 and Phe261 each coordinate a plastoquinone. His214 is a Fe cation binding site. A Fe cation-binding site is contributed by His268. A helical membrane pass occupies residues Gly278 to Arg294.

It belongs to the reaction center PufL/M/PsbA/D family. In terms of assembly, PSII is composed of 1 copy each of membrane proteins PsbA, PsbB, PsbC, PsbD, PsbE, PsbF, PsbH, PsbI, PsbJ, PsbK, PsbL, PsbM, PsbT, PsbX, PsbY, PsbZ, Psb30/Ycf12, at least 3 peripheral proteins of the oxygen-evolving complex and a large number of cofactors. It forms dimeric complexes. The cofactor is The D1/D2 heterodimer binds P680, chlorophylls that are the primary electron donor of PSII, and subsequent electron acceptors. It shares a non-heme iron and each subunit binds pheophytin, quinone, additional chlorophylls, carotenoids and lipids. There is also a Cl(-1) ion associated with D1 and D2, which is required for oxygen evolution. The PSII complex binds additional chlorophylls, carotenoids and specific lipids..

It is found in the plastid. Its subcellular location is the chloroplast thylakoid membrane. The enzyme catalyses 2 a plastoquinone + 4 hnu + 2 H2O = 2 a plastoquinol + O2. Photosystem II (PSII) is a light-driven water:plastoquinone oxidoreductase that uses light energy to abstract electrons from H(2)O, generating O(2) and a proton gradient subsequently used for ATP formation. It consists of a core antenna complex that captures photons, and an electron transfer chain that converts photonic excitation into a charge separation. The D1/D2 (PsbA/PsbD) reaction center heterodimer binds P680, the primary electron donor of PSII as well as several subsequent electron acceptors. D2 is needed for assembly of a stable PSII complex. This Chlorella vulgaris (Green alga) protein is Photosystem II D2 protein.